Here is a 542-residue protein sequence, read N- to C-terminus: Chaperonin GroEL (542 aa).

Residues 29–32 (TLGP), 86–90 (DGTTT), glycine 413, 476–478 (NAA), and aspartate 492 contribute to the ATP site. Residues 522–542 (PDENGPAAVPDMGMGGMGGMM) are disordered.

The protein belongs to the chaperonin (HSP60) family. Forms a cylinder of 14 subunits composed of two heptameric rings stacked back-to-back. Interacts with the co-chaperonin GroES.

Its subcellular location is the cytoplasm. It catalyses the reaction ATP + H2O + a folded polypeptide = ADP + phosphate + an unfolded polypeptide.. Its function is as follows. Together with its co-chaperonin GroES, plays an essential role in assisting protein folding. The GroEL-GroES system forms a nano-cage that allows encapsulation of the non-native substrate proteins and provides a physical environment optimized to promote and accelerate protein folding. The sequence is that of Chaperonin GroEL from Listeria monocytogenes serotype 4b (strain CLIP80459).